We begin with the raw amino-acid sequence, 243 residues long: Glucosamine-6-phosphate deaminase (243 aa).

The Proton acceptor; for enolization step role is filled by Asp-67. The active-site For ring-opening step is the Asn-137. Catalysis depends on His-139, which acts as the Proton acceptor; for ring-opening step. Residue Glu-144 is the For ring-opening step of the active site.

It belongs to the glucosamine/galactosamine-6-phosphate isomerase family. NagB subfamily.

It catalyses the reaction alpha-D-glucosamine 6-phosphate + H2O = beta-D-fructose 6-phosphate + NH4(+). It participates in amino-sugar metabolism; N-acetylneuraminate degradation; D-fructose 6-phosphate from N-acetylneuraminate: step 5/5. Its function is as follows. Catalyzes the reversible isomerization-deamination of glucosamine 6-phosphate (GlcN6P) to form fructose 6-phosphate (Fru6P) and ammonium ion. In Staphylococcus epidermidis (strain ATCC 35984 / DSM 28319 / BCRC 17069 / CCUG 31568 / BM 3577 / RP62A), this protein is Glucosamine-6-phosphate deaminase.